The primary structure comprises 459 residues: MLKIFNTLTREKEIFKPIHENKVGMYVCGVTVYDLCHIGHGRTFVCFDVIARYLRSLGYDLTYVRNITDVDDKIIKRALENKETCDQLVDRMVQEMYKDFDALNVLRPDFEPRATHHIPEIIEIVEKLIKRGHAYVADNGDVMFDVESFKEYGKLSRQDLEQLQAGARIEINEIKKNPMDFVLWKMSKENEPSWASPWGAGRPGWHIECSAMNCKQLGEHFDIHGGGSDLMFPHHENEIAQSCCAHGGQYVNYWIHSGMIMVDKEKMSKSLGNFFTIRDVLNHYNAEAVRYFLLTAHYRSQLNYSEENLNLAQGALERLYTALRGTDQSAVVFGGENFVETFREAMDDDFNTPNALSVLFEMAREINKLKTEDAEKANGLAARLRELGAILGLLQQDPEKFLQAGSDDDEVAKIEALIKQRNEARAAKDWATADAARNELIAMGIVLEDGPNGTTWRKQ.

Cys28 provides a ligand contact to Zn(2+). The 'HIGH' region signature appears at 30 to 40 (VTVYDLCHIGH). Cys209, His234, and Glu238 together coordinate Zn(2+). The 'KMSKS' region motif lies at 266–270 (KMSKS). An ATP-binding site is contributed by Lys269.

It belongs to the class-I aminoacyl-tRNA synthetase family. In terms of assembly, monomer. Zn(2+) is required as a cofactor.

Its subcellular location is the cytoplasm. The enzyme catalyses tRNA(Cys) + L-cysteine + ATP = L-cysteinyl-tRNA(Cys) + AMP + diphosphate. The polypeptide is Cysteine--tRNA ligase (Haemophilus influenzae (strain 86-028NP)).